Consider the following 294-residue polypeptide: Chelated iron transport system membrane protein YfeC (294 aa).

A run of 8 helical transmembrane segments spans residues 17 to 37, 51 to 71, 93 to 113, 140 to 160, 169 to 189, 194 to 214, 221 to 241, and 246 to 266; these read AIWV…YLML, VVPG…GAFF, AIIG…VSLN, IIIL…LAVF, IGLS…ACTV, TVGA…AYLL, LLII…YLSF, and ATGG…FFFA.

This sequence belongs to the ABC-3 integral membrane protein family.

It is found in the cell inner membrane. Part of an ATP-driven transport system YfeABC for chelated iron. The polypeptide is Chelated iron transport system membrane protein YfeC (yfeC) (Yersinia pestis).